A 215-amino-acid polypeptide reads, in one-letter code: Ribonuclease T (215 aa).

Positions 20–194 (VVIDVETAGF…YDTERTAVLF (175 aa)) constitute an Exonuclease domain. Mg(2+)-binding residues include Asp-23, Glu-25, His-181, and Asp-186. The active-site Proton donor/acceptor is His-181.

It belongs to the RNase T family. Homodimer. It depends on Mg(2+) as a cofactor.

Trims short 3' overhangs of a variety of RNA species, leaving a one or two nucleotide 3' overhang. Responsible for the end-turnover of tRNA: specifically removes the terminal AMP residue from uncharged tRNA (tRNA-C-C-A). Also appears to be involved in tRNA biosynthesis, especially in strains lacking other exoribonucleases. Its function is as follows. A general regulator of small RNAs (sRNA), contributes to their degradation. Upon overexpression suppresses sRNA-mediated RhyB-silencing of multiple RNA targets; overexpression leads to nearly complete loss of RhyB sRNA. In Escherichia coli (strain K12), this protein is Ribonuclease T.